Reading from the N-terminus, the 147-residue chain is Ubiquitin-conjugating enzyme E2 D2B (147 aa).

The UBC core domain maps to 1-147 (MALKRIHKEL…AREWTQKYAM (147 aa)). Cysteine 85 (glycyl thioester intermediate) is an active-site residue.

Belongs to the ubiquitin-conjugating enzyme family. Interacts with CNOT4 (via RING domain). As to expression, testis-specific. Mainly expressed in the round spermatids (at protein level).

It catalyses the reaction S-ubiquitinyl-[E1 ubiquitin-activating enzyme]-L-cysteine + [E2 ubiquitin-conjugating enzyme]-L-cysteine = [E1 ubiquitin-activating enzyme]-L-cysteine + S-ubiquitinyl-[E2 ubiquitin-conjugating enzyme]-L-cysteine.. It functions in the pathway protein modification; protein ubiquitination. Functionally, catalyzes the covalent attachment of ubiquitin to other proteins. Mediates the selective degradation of short-lived and abnormal proteins. Functions in the E6/E6-AP-induced ubiquitination of p53/TP53. Mediates ubiquitination of PEX5 and SQSTM1 and autoubiquitination of STUB1 and TRAF6. Involved in the signal-induced conjugation and subsequent degradation of NFKBIA, FBXW2-mediated GCM1 ubiquitination and degradation, MDM2-dependent degradation of p53/TP53 and the activation of MAVS in the mitochondria by RIGI in response to viral infection Plays a role in early maturation of the testis. This is Ubiquitin-conjugating enzyme E2 D2B (Ube2d2b) from Rattus norvegicus (Rat).